The following is a 347-amino-acid chain: S-adenosylmethionine:tRNA ribosyltransferase-isomerase (347 aa).

It belongs to the QueA family. In terms of assembly, monomer.

Its subcellular location is the cytoplasm. The catalysed reaction is 7-aminomethyl-7-carbaguanosine(34) in tRNA + S-adenosyl-L-methionine = epoxyqueuosine(34) in tRNA + adenine + L-methionine + 2 H(+). It functions in the pathway tRNA modification; tRNA-queuosine biosynthesis. Transfers and isomerizes the ribose moiety from AdoMet to the 7-aminomethyl group of 7-deazaguanine (preQ1-tRNA) to give epoxyqueuosine (oQ-tRNA). The polypeptide is S-adenosylmethionine:tRNA ribosyltransferase-isomerase (Pseudomonas aeruginosa (strain UCBPP-PA14)).